Reading from the N-terminus, the 931-residue chain is Translation initiation factor IF-2 (931 aa).

Residues 32–310 (KSASSTVEPP…SSKARKNRLA (279 aa)) form a disordered region. Residues 50 to 59 (FASSGQGNAS) are compositionally biased toward polar residues. Positions 82-96 (PAAPSAPKPAAPAAP) are enriched in pro residues. Low complexity predominate over residues 156 to 168 (GNAPQGGNNANGA). Gly residues-rich tracts occupy residues 217-238 (RPGQ…GGAK), 248-271 (GQGG…GFQG), and 281-298 (ARGG…GRQG). The 173-residue stretch at 424–596 (PRPPVVTVMG…VLLTADAELD (173 aa)) folds into the tr-type G domain. The interval 433-440 (GHVDHGKT) is G1. 433-440 (GHVDHGKT) provides a ligand contact to GTP. The tract at residues 458–462 (GITQR) is G2. The G3 stretch occupies residues 483 to 486 (DTPG). Residues 483–487 (DTPGH) and 537–540 (NKID) contribute to the GTP site. The segment at 537-540 (NKID) is G4. Residues 573-575 (SAK) form a G5 region.

This sequence belongs to the TRAFAC class translation factor GTPase superfamily. Classic translation factor GTPase family. IF-2 subfamily.

It localises to the cytoplasm. Its function is as follows. One of the essential components for the initiation of protein synthesis. Protects formylmethionyl-tRNA from spontaneous hydrolysis and promotes its binding to the 30S ribosomal subunits. Also involved in the hydrolysis of GTP during the formation of the 70S ribosomal complex. This is Translation initiation factor IF-2 from Bifidobacterium adolescentis (strain ATCC 15703 / DSM 20083 / NCTC 11814 / E194a).